The following is a 375-amino-acid chain: Aminomethyltransferase (375 aa).

This sequence belongs to the GcvT family. In terms of assembly, the glycine cleavage system is composed of four proteins: P, T, L and H.

It catalyses the reaction N(6)-[(R)-S(8)-aminomethyldihydrolipoyl]-L-lysyl-[protein] + (6S)-5,6,7,8-tetrahydrofolate = N(6)-[(R)-dihydrolipoyl]-L-lysyl-[protein] + (6R)-5,10-methylene-5,6,7,8-tetrahydrofolate + NH4(+). Functionally, the glycine cleavage system catalyzes the degradation of glycine. This Ralstonia nicotianae (strain ATCC BAA-1114 / GMI1000) (Ralstonia solanacearum) protein is Aminomethyltransferase.